The following is a 234-amino-acid chain: Membrane glycoprotein RL11 (234 aa).

Residues 1 to 23 form the signal peptide; sequence MQTYSTPLTLIIVTSLFLFTTQG. The helical transmembrane segment at 183–203 threads the bilayer; that stretch reads LHCAWVSGLMIFVGALVICFL.

The protein resides in the host membrane. This is Membrane glycoprotein RL11 (RL11) from Human cytomegalovirus (strain Merlin) (HHV-5).